A 225-amino-acid polypeptide reads, in one-letter code: Ribonuclease 3 (225 aa).

One can recognise an RNase III domain in the interval 5-127 (IEKLTRQLGY…IIGAVYLDSD (123 aa)). Residue Glu-40 participates in Mg(2+) binding. Asp-44 is a catalytic residue. 2 residues coordinate Mg(2+): Asp-113 and Glu-116. The active site involves Glu-116. A DRBM domain is found at 154-224 (DPKTRLQEFL…AELALEQLTN (71 aa)).

It belongs to the ribonuclease III family. In terms of assembly, homodimer. Mg(2+) serves as cofactor.

It localises to the cytoplasm. It carries out the reaction Endonucleolytic cleavage to 5'-phosphomonoester.. In terms of biological role, digests double-stranded RNA. Involved in the processing of primary rRNA transcript to yield the immediate precursors to the large and small rRNAs (23S and 16S). Processes some mRNAs, and tRNAs when they are encoded in the rRNA operon. Processes pre-crRNA and tracrRNA of type II CRISPR loci if present in the organism. The chain is Ribonuclease 3 from Vibrio vulnificus (strain YJ016).